The primary structure comprises 87 residues: Cell division protein FtsL (87 aa).

The Cytoplasmic portion of the chain corresponds to 1–6; sequence MNKSNF. The chain crosses the membrane as a helical span at residues 7–23; sequence FLLLAVCVSAFSVVMQQ. The Periplasmic portion of the chain corresponds to 24–87; the sequence is NQYRLNFTAL…GNTFMVEHQR (64 aa). The stretch at 31–71 forms a coiled coil; the sequence is TALDKAKKQEIALEQDYAQMRLQQARLANHEAIRAAAEKQN. The tract at residues 68–87 is disordered; it reads EKQNLHPPVSGNTFMVEHQR.

This sequence belongs to the FtsL family. Part of a complex composed of FtsB, FtsL and FtsQ.

Its subcellular location is the cell inner membrane. Its function is as follows. Essential cell division protein. May link together the upstream cell division proteins, which are predominantly cytoplasmic, with the downstream cell division proteins, which are predominantly periplasmic. The polypeptide is Cell division protein FtsL (Neisseria gonorrhoeae (strain ATCC 700825 / FA 1090)).